Reading from the N-terminus, the 827-residue chain is NT-3 growth factor receptor (827 aa).

A signal peptide spans 1 to 31; sequence MDVSLCPTKCTFWRVFLLWSIWGDYLLSVLA. 2 disulfides stabilise this stretch: Cys-32/Cys-38 and Cys-36/Cys-45. The Extracellular portion of the chain corresponds to 32–430; it reads CPANCLCSKT…ITVTHKPEED (399 aa). Residues Asn-68, Asn-72, and Asn-79 are each glycosylated (N-linked (GlcNAc...) asparagine). 2 LRR repeats span residues 104–125 and 128–149; these read GLQRLTIRNSGLRNIQPRAFAK and HLRYIDLSGNRLTTLSWQLFQT. The LRRCT domain occupies 160 to 209; sequence NPFNCSCDIRWIQLWQEKGEANLQSQQLHCMNLDTAVILLRNMNITQCDL. N-linked (GlcNAc...) asparagine glycosylation occurs at Asn-163. Intrachain disulfides connect Cys-164–Cys-189 and Cys-166–Cys-207. Residues Asn-203, Asn-218, Asn-232, Asn-259, Asn-267, Asn-272, and Asn-294 are each glycosylated (N-linked (GlcNAc...) asparagine). Ig-like C2-type domains are found at residues 210–300 and 319–382; these read PEIS…VLLT and HCIA…VATN. Cys-231 and Cys-284 are joined by a disulfide. The cysteines at positions 320 and 362 are disulfide-linked. Residues Asn-375 and Asn-388 are each glycosylated (N-linked (GlcNAc...) asparagine). Residues 431 to 455 form a helical membrane-spanning segment; that stretch reads TFGVSIAVGLAAFACVLLVVLFIMI. Residues 456–827 lie on the Cytoplasmic side of the membrane; the sequence is NKYGRRSKFG…ATPIYLDILG (372 aa). A Phosphotyrosine; by autocatalysis modification is found at Tyr-518. Residues 540-812 enclose the Protein kinase domain; the sequence is IVLKRELGEG…LNIKEIYKIL (273 aa). ATP-binding positions include 546-554 and Lys-574; that span reads LGEGAFGKV. Asp-681 serves as the catalytic Proton acceptor. 4 positions are modified to phosphotyrosine; by autocatalysis: Tyr-707, Tyr-711, Tyr-712, and Tyr-822.

The protein belongs to the protein kinase superfamily. Tyr protein kinase family. Insulin receptor subfamily. Exists in a dynamic equilibrium between monomeric (low affinity) and dimeric (high affinity) structures. Interacts with PTPRS. Ligand-mediated auto-phosphorylation.

It is found in the membrane. The enzyme catalyses L-tyrosyl-[protein] + ATP = O-phospho-L-tyrosyl-[protein] + ADP + H(+). Functionally, receptor tyrosine kinase involved in nervous system and probably heart development. Upon binding of its ligand NTF3/neurotrophin-3, NTRK3 autophosphorylates and activates different signaling pathways, including the phosphatidylinositol 3-kinase/AKT and the MAPK pathways, that control cell survival and differentiation. The KT and KD isoforms fail to stimulate transformation, process outgrowth or survival. Isoform KI25 exhibits tyrosine phosphorylation in the absence of ligand and is unable to mediate survival of neuronal cells. The chain is NT-3 growth factor receptor (NTRK3) from Gallus gallus (Chicken).